A 562-amino-acid chain; its full sequence is Malate synthase (562 aa).

Residue R177 is the Proton acceptor of the active site. D463 functions as the Proton donor in the catalytic mechanism. The short motif at 560–562 is the Microbody targeting signal element; the sequence is SRL.

It belongs to the malate synthase family.

The protein localises to the glyoxysome. The catalysed reaction is glyoxylate + acetyl-CoA + H2O = (S)-malate + CoA + H(+). The protein operates within carbohydrate metabolism; glyoxylate cycle; (S)-malate from isocitrate: step 2/2. Does not seem to be essential for lipid utilization and gluconeogenesis in seedlings. The sequence is that of Malate synthase from Arabidopsis thaliana (Mouse-ear cress).